The primary structure comprises 174 residues: Crossover junction endodeoxyribonuclease RuvC (174 aa).

Catalysis depends on residues aspartate 8, glutamate 69, and aspartate 141. 3 residues coordinate Mg(2+): aspartate 8, glutamate 69, and aspartate 141.

This sequence belongs to the RuvC family. Homodimer which binds Holliday junction (HJ) DNA. The HJ becomes 2-fold symmetrical on binding to RuvC with unstacked arms; it has a different conformation from HJ DNA in complex with RuvA. In the full resolvosome a probable DNA-RuvA(4)-RuvB(12)-RuvC(2) complex forms which resolves the HJ. Requires Mg(2+) as cofactor.

It localises to the cytoplasm. It catalyses the reaction Endonucleolytic cleavage at a junction such as a reciprocal single-stranded crossover between two homologous DNA duplexes (Holliday junction).. Its function is as follows. The RuvA-RuvB-RuvC complex processes Holliday junction (HJ) DNA during genetic recombination and DNA repair. Endonuclease that resolves HJ intermediates. Cleaves cruciform DNA by making single-stranded nicks across the HJ at symmetrical positions within the homologous arms, yielding a 5'-phosphate and a 3'-hydroxyl group; requires a central core of homology in the junction. The consensus cleavage sequence is 5'-(A/T)TT(C/G)-3'. Cleavage occurs on the 3'-side of the TT dinucleotide at the point of strand exchange. HJ branch migration catalyzed by RuvA-RuvB allows RuvC to scan DNA until it finds its consensus sequence, where it cleaves and resolves the cruciform DNA. The polypeptide is Crossover junction endodeoxyribonuclease RuvC (Xanthomonas campestris pv. campestris (strain 8004)).